The following is a 449-amino-acid chain: MFS acetylaranotin efflux transporter ataA (449 aa).

Transmembrane regions (helical) follow at residues 6–26 (SVYV…TAIP), 45–65 (YLLV…YFPI), 67–87 (WVFL…GAAP), 115–135 (FYIN…FLHV), 155–175 (LGVV…QWGG), 182–202 (NGRI…FLAI), and 227–247 (LFMT…PIWF). N-linked (GlcNAc...) asparagine glycosylation is present at Asn-252. 5 helical membrane passes run 260–280 (IMCL…GGGV), 287–307 (VPFF…MTTF), 321–341 (VLLG…VQAV), 349–369 (VGTA…VSVA), and 420–440 (ALVS…LGAV).

Belongs to the major facilitator superfamily.

Its subcellular location is the cell membrane. Functionally, efflux pump that may provide the dual role of acetylaranotin export and self-protection by allowing the fungus to evade the harmful effect of its own acetylaranotin production. This is MFS acetylaranotin efflux transporter ataA from Aspergillus terreus (strain NIH 2624 / FGSC A1156).